Consider the following 475-residue polypeptide: Ribulose bisphosphate carboxylase large chain (475 aa).

Residues 1–2 constitute a propeptide that is removed on maturation; sequence MS. Pro-3 bears the N-acetylproline mark. Lys-14 is subject to N6,N6,N6-trimethyllysine. Positions 123 and 173 each coordinate substrate. The active-site Proton acceptor is the Lys-175. Substrate is bound at residue Lys-177. Positions 201, 203, and 204 each coordinate Mg(2+). At Lys-201 the chain carries N6-carboxylysine. The Proton acceptor role is filled by His-294. Substrate-binding residues include Arg-295, His-327, and Ser-379.

Belongs to the RuBisCO large chain family. Type I subfamily. As to quaternary structure, heterohexadecamer of 8 large chains and 8 small chains; disulfide-linked. The disulfide link is formed within the large subunit homodimers. It depends on Mg(2+) as a cofactor. The disulfide bond which can form in the large chain dimeric partners within the hexadecamer appears to be associated with oxidative stress and protein turnover.

The protein localises to the plastid. The protein resides in the chloroplast. The catalysed reaction is 2 (2R)-3-phosphoglycerate + 2 H(+) = D-ribulose 1,5-bisphosphate + CO2 + H2O. The enzyme catalyses D-ribulose 1,5-bisphosphate + O2 = 2-phosphoglycolate + (2R)-3-phosphoglycerate + 2 H(+). Its function is as follows. RuBisCO catalyzes two reactions: the carboxylation of D-ribulose 1,5-bisphosphate, the primary event in carbon dioxide fixation, as well as the oxidative fragmentation of the pentose substrate in the photorespiration process. Both reactions occur simultaneously and in competition at the same active site. This is Ribulose bisphosphate carboxylase large chain from Cycas taitungensis (Prince sago).